Reading from the N-terminus, the 265-residue chain is tRNA pseudouridine synthase A (265 aa).

The Nucleophile role is filled by Asp-58. Position 116 (Tyr-116) interacts with substrate.

The protein belongs to the tRNA pseudouridine synthase TruA family. As to quaternary structure, homodimer.

The catalysed reaction is uridine(38/39/40) in tRNA = pseudouridine(38/39/40) in tRNA. Formation of pseudouridine at positions 38, 39 and 40 in the anticodon stem and loop of transfer RNAs. The chain is tRNA pseudouridine synthase A from Neisseria meningitidis serogroup C / serotype 2a (strain ATCC 700532 / DSM 15464 / FAM18).